The primary structure comprises 553 residues: Mothers against decapentaplegic homolog 4 (553 aa).

The tract at residues 1-323 (MDNMSITNTP…PISNHPAPEY (323 aa)) is mediates interaction with ZBTB7A. In terms of domain architecture, MH1 spans 18–142 (SIVHSLMCHR…YERVVSPGID (125 aa)). Position 37 is an N6-acetyllysine (K37). Positions 44 to 69 (VKKLKEKKDELDSLITAITTNGAHPS) are required for interaction with TSC22D1. C71 is a Zn(2+) binding site. K113 participates in a covalent cross-link: Glycyl lysine isopeptide (Lys-Gly) (interchain with G-Cter in SUMO2). The Zn(2+) site is built by C115, C127, and H132. Residues 168-194 (GQPSLSTEGHSIQTIQHPPSNRASTET) are disordered. Over residues 170–194 (PSLSTEGHSIQTIQHPPSNRASTET) the composition is skewed to polar residues. The tract at residues 275–321 (PYTPNLPHHQNGHLQHHPPMPPHPGHYWPPVHNELAFQPPISNHPAP) is SAD. In terms of domain architecture, MH2 spans 324–553 (WCSIAYFEMD…MPIADPQPLD (230 aa)). N6-acetyllysine is present on residues K429 and K508. A Glycyl lysine isopeptide (Lys-Gly) (interchain with G-Cter in ubiquitin) cross-link involves residue K520.

The protein belongs to the dwarfin/SMAD family. In terms of assembly, monomer; in the absence of TGF-beta activation. Heterotrimer; on TGF-beta activation. Heterotrimer composed of two molecules of a C-terminally phosphorylated R-SMAD molecule, SMAD2 or SMAD3, and one molecule of SMAD4 to form the transcriptional active SMAD2/SMAD3-SMAD4 complex. Found in a ternary complex composed of SMAD4, STK11/LKB1 and STK11IP. Found in a complex with SMAD1 and YY1. Identified in a complex that contains at least ZNF451, SMAD2, SMAD3 and SMAD4. Interacts with ATF2, COPS5, DACH1, MSG1, SKI, STK11/LKB1, STK11IP and TRIM33. Associates with ZNF423 or ZNF521 in response to BMP2 leading to activate transcription of BMP target genes. Interacts with USP9X. Interacts with RBPMS. Interacts with WWTR1 (via coiled-coil domain). Interacts with CITED1 and CITED2. Interacts with PDPK1 (via PH domain). Interacts with VPS39; this interaction affects heterodimer formation with SMAD3, but not with SMAD2, and leads to inhibition of SMAD3-dependent transcription activation. Interactions with VPS39 and SMAD2 may be mutually exclusive. Interacts (via MH2 domain) with ZNF451 (via N-terminal zinc-finger domains). Interacts with ZC3H3. Interacts weakly with ZNF8. Interacts with NUP93 and IPO7; translocates SMAD4 to the nucleus through the NPC upon BMP7 stimulation resulting in activation of SMAD4 signaling. Interacts with CREB3L1, the interaction takes place upon TGFB1 induction and SMAD4 acts as a CREB3L1 coactivator to induce the expression of genes involved in the assembly of collagen extracellular matrix. Interacts with DLX1. Interacts with ZBTB7A; the interaction is direct and stimulated by TGFB1. Interacts with CREBBP; the recruitment of this transcriptional coactivator is negatively regulated by ZBTB7A. Interacts with EP300; the interaction with this transcriptional coactivator is negatively regulated by ZBTB7A. Interacts with HDAC1. Interacts (via MH2 domain) with ZMIZ1 (via SP-RING-type domain); in the TGF-beta signaling pathway increases the activity of the SMAD3/SMAD4 transcriptional complex. Interacts (via N-terminus) with TSC22D1. In terms of processing, monoubiquitinated on Lys-520 by E3 ubiquitin-protein ligase TRIM33. Monoubiquitination hampers its ability to form a stable complex with activated SMAD2/3 resulting in inhibition of TGF-beta/BMP signaling cascade. Post-translationally, phosphorylated by PDPK1.

The protein resides in the cytoplasm. Its subcellular location is the nucleus. Common SMAD (co-SMAD) is the coactivator and mediator of signal transduction by TGF-beta (transforming growth factor). Component of the heterotrimeric SMAD2/SMAD3-SMAD4 complex that forms in the nucleus and is required for the TGF-mediated signaling. Promotes binding of the SMAD2/SMAD4/FAST-1 complex to DNA and provides an activation function required for SMAD1 or SMAD2 to stimulate transcription. Component of the multimeric SMAD3/SMAD4/JUN/FOS complex which forms at the AP1 promoter site; required for synergistic transcriptional activity in response to TGF-beta. Acts synergistically with SMAD1 and YY1 in bone morphogenetic protein (BMP)-mediated cardiac-specific gene expression. Binds to SMAD binding elements (SBEs) (5'-GTCT/AGAC-3') within BMP response element (BMPRE) of cardiac activating regions. May act as a tumor suppressor. Positively regulates PDPK1 kinase activity by stimulating its dissociation from the 14-3-3 protein YWHAQ which acts as a negative regulator. In muscle physiology, plays a central role in the balance between atrophy and hypertrophy. When recruited by MSTN, promotes atrophy response via phosphorylated SMAD2/4. MSTN decrease causes SMAD4 release and subsequent recruitment by the BMP pathway to promote hypertrophy via phosphorylated SMAD1/5/8. The polypeptide is Mothers against decapentaplegic homolog 4 (SMAD4) (Bos taurus (Bovine)).